The following is a 330-amino-acid chain: Protoheme IX farnesyltransferase (330 aa).

Transmembrane regions (helical) follow at residues 33–53, 54–74, 101–121, 126–146, 154–174, 180–200, 227–247, 250–270, and 308–328; these read VMTL…VDAD, PFLA…AGAL, VSNA…LMAL, LAAG…TMIL, IVIG…AATG, AVIL…ALAL, ILLY…TGLG, VYGA…WRIF, and VLFA…IPGV.

This sequence belongs to the UbiA prenyltransferase family. Protoheme IX farnesyltransferase subfamily. Interacts with CtaA.

The protein resides in the cell inner membrane. It carries out the reaction heme b + (2E,6E)-farnesyl diphosphate + H2O = Fe(II)-heme o + diphosphate. It participates in porphyrin-containing compound metabolism; heme O biosynthesis; heme O from protoheme: step 1/1. In terms of biological role, converts heme B (protoheme IX) to heme O by substitution of the vinyl group on carbon 2 of heme B porphyrin ring with a hydroxyethyl farnesyl side group. The polypeptide is Protoheme IX farnesyltransferase (Maricaulis maris (strain MCS10) (Caulobacter maris)).